The primary structure comprises 21 residues: Preblooming protein 2 (21 aa).

In terms of biological role, possible mediator for cell division in the blooming process. This chain is Preblooming protein 2, found in Prorocentrum triestinum (Red tide alga).